A 1142-amino-acid polypeptide reads, in one-letter code: Enamelin (1142 aa).

The N-terminal stretch at 1–38 (MLLSCRHGASSPKLDNLVPSGKMKILLVFLGLLCYSAA) is a signal peptide. S53 carries the post-translational modification Phosphoserine. Disordered regions lie at residues 90-347 (YQMP…FYRN), 374-513 (YRRV…IIPK), 543-587 (TEGI…LSHG), and 603-662 (RENS…FPGQ). Positions 128–148 (QPQPKTPTPKQPLNEPSPTPT) are enriched in pro residues. Phosphoserine is present on residues S191 and S216. Basic and acidic residues predominate over residues 223 to 234 (DFEKPKEKDPPK). 2 stretches are compositionally biased toward polar residues: residues 243 to 303 (SVNT…SQSP) and 381 to 395 (TARS…NSAN). 4 N-linked (GlcNAc...) asparagine glycosylation sites follow: N245, N252, N264, and N291. Residues 277–514 (NPRSNPTGQN…QTQTQIIPKG (238 aa)) constitute a propeptide that is removed on maturation. Basic and acidic residues predominate over residues 431 to 442 (PREKQVSQKERT). A compositionally biased stretch (polar residues) spans 453–467 (WRNSQDYGINKSNYK). N-linked (GlcNAc...) asparagine glycosylation is present at N462. The residue at position 547 (P547) is a Hydroxyproline. Residues 570-582 (FKEDPGRQEEHLP) are compositionally biased toward basic and acidic residues. Residues 666-669 (DMEE) constitute a propeptide that is removed on maturation. The segment covering 787–816 (NLYKTPTSSPHQKENQPYSNNSPAGLQKNP) has biased composition (polar residues). 3 disordered regions span residues 787–820 (NLYK…TWHE), 921–965 (TSIV…SQLS), and 1020–1049 (VFGT…QQRQ). N-linked (GlcNAc...) asparagine glycosylation occurs at N929. The span at 952-965 (LRRSTPCSVKSQLS) shows a compositional bias: polar residues. N1040 is a glycosylation site (N-linked (GlcNAc...) asparagine).

In terms of processing, proteolytically cleaved into several smaller polypeptides. Cleavage of N-terminal region of enamelin occurs soon after secretion. Post-translationally, phosphorylated by FAM20C in vitro. As to expression, expressed by secretory-phase ameloblasts. Intact enamelin and large-molecular-weight enamelins are limited to the most superficial layer of the developing enamel matrix, while low-molecular-weight enamelins are observed in deeper enamelin. Preferential localization among the crystallites in rod and interrod enamel.

The protein localises to the secreted. Its subcellular location is the extracellular space. It localises to the extracellular matrix. Functionally, involved in the mineralization and structural organization of enamel. Involved in the extension of enamel during the secretory stage of dental enamel formation. The sequence is that of Enamelin (ENAM) from Sus scrofa (Pig).